The following is a 938-amino-acid chain: MSSLTILLQRACLRFALLPVPPLRAPLRPPRRPLGLPRRSAMSSSAASRLSHIVAAAGGAAGESSEPPAAAAAASGLAQEDDDLSSAMMGYRLPPKEIQDIVDAPPLPVLSFSPSKDKILFLKRRALPPLSDLAKPEEKLAGVRIDGYSNTRSRMSFYTGIGIHKLMDDGTLGPEKVVHGYPEGARINFVTWSQDGRHLSFSVRVDEEDNTSGKLRLWIADVESGEARPLFKSPEIYLNAIFDSFVWVNNSTLLVCTIPLSRGAPPQKPSVPSGPKIQSNETSNVVQVRTFQDLLKDEYDADLFDYYATSQLVLASFDGTVKPIGPPAVYTSIDPSPDDKYLMISSIHRPYSYIVPCGRFPKKVELWTVDGEFIRELCDLPLAEDIPIATSSVRKGKRSIYWRPDKPAMLYWVETQDGGDAKVEVSPRDIVYMENAEPINGEQPEILHKLDLRYAGTSWCDESLALVYESWYKTRKTRTWVISPDKKDVSPRILFDRSSEDVYSDPGSPMLRRTAMGTYVIAKVKKQDENTYILLNGMGATPEGNVPFLDLFDINTGSKERIWQSDKEKYYETVVALMSDKTDGELPLEKLKILTSKESKTENTQYYLQIWPEKKQVQITDFPHPYPQLASLYKEMIRYQRKDGVQLTATLYLPPGYDPSQDGPLPCLVWSYPGEFKSKDAAGQVRGSPNEFPGIGATSPLLWLARGFAILSGPTIPIIGEGDEEANDRYVEQLVTSAEAAAEEVVRRGVAHPDKIAVGGHSYGAFMTANLLAHAPHLFCCGIARSGAYNRTLTPFGFQNEDRTLWEATNTYVEMSPFMSANKIKKPILLIHGEQDNNSGTLTMQSDRFFNALKGHGALSRLVILPFESHGYSARESIMHVLWETDRWLQKYCLSGSSKTDSDSVADTENKTVSASGGGAPCEGPEAEGFSSMQRSLL.

The transit peptide at 1-54 (MSSLTILLQRACLRFALLPVPPLRAPLRPPRRPLGLPRRSAMSSSAASRLSHIV) directs the protein to the chloroplast. Over residues 58 to 76 (GGAAGESSEPPAAAAAASG) the composition is skewed to low complexity. The segment at 58–77 (GGAAGESSEPPAAAAAASGL) is disordered. Catalysis depends on charge relay system residues Ser-762, Asp-836, and His-870. Polar residues predominate over residues 897–913 (SSKTDSDSVADTENKTV). Residues 897–938 (SSKTDSDSVADTENKTVSASGGGAPCEGPEAEGFSSMQRSLL) are disordered.

This sequence belongs to the peptidase S9D family.

Its subcellular location is the plastid. It is found in the chloroplast stroma. Its function is as follows. Serine-type protease active in vitro against the LHCII N-terminal. Cleaves its substrate on the carboxy-side of Glu residues. In Oryza sativa subsp. japonica (Rice), this protein is Probable glutamyl endopeptidase, chloroplastic (GEP).